A 150-amino-acid chain; its full sequence is Large ribosomal subunit protein bL9 (150 aa).

Belongs to the bacterial ribosomal protein bL9 family.

In terms of biological role, binds to the 23S rRNA. This chain is Large ribosomal subunit protein bL9, found in Shewanella oneidensis (strain ATCC 700550 / JCM 31522 / CIP 106686 / LMG 19005 / NCIMB 14063 / MR-1).